A 142-amino-acid polypeptide reads, in one-letter code: Large ribosomal subunit protein uL13 (142 aa).

This sequence belongs to the universal ribosomal protein uL13 family. Part of the 50S ribosomal subunit.

In terms of biological role, this protein is one of the early assembly proteins of the 50S ribosomal subunit, although it is not seen to bind rRNA by itself. It is important during the early stages of 50S assembly. The sequence is that of Large ribosomal subunit protein uL13 from Methanosphaera stadtmanae (strain ATCC 43021 / DSM 3091 / JCM 11832 / MCB-3).